The chain runs to 71 residues: Pro-MCH (71 aa).

The first 20 residues, 1 to 20 (AKMNLSSYILILTFSLFSQG), serve as a signal peptide directing secretion.

Belongs to the melanin-concentrating hormone family.

It is found in the secreted. The chain is Pro-MCH (PMCH) from Hylobates lar (Lar gibbon).